A 252-amino-acid polypeptide reads, in one-letter code: Flap endonuclease Xni (252 aa).

Position 105 (aspartate 105) interacts with Mg(2+). The 5'-3' exonuclease domain occupies 162 to 251 (EQYQFLDFIA…EINLKQFRVK (90 aa)). Residues leucine 172, alanine 173, proline 181, isoleucine 183, and isoleucine 186 each contribute to the K(+) site. The segment at 185 to 190 (GIGPKS) is interaction with DNA.

Belongs to the Xni family. Mg(2+) is required as a cofactor. It depends on K(+) as a cofactor.

Has flap endonuclease activity. During DNA replication, flap endonucleases cleave the 5'-overhanging flap structure that is generated by displacement synthesis when DNA polymerase encounters the 5'-end of a downstream Okazaki fragment. In Shewanella denitrificans (strain OS217 / ATCC BAA-1090 / DSM 15013), this protein is Flap endonuclease Xni.